The chain runs to 427 residues: Histidinol dehydrogenase (427 aa).

Y123, Q185, and N208 together coordinate NAD(+). S231, Q253, and H256 together coordinate substrate. Residues Q253 and H256 each contribute to the Zn(2+) site. Active-site proton acceptor residues include E321 and H322. 4 residues coordinate substrate: H322, D355, E409, and H414. Position 355 (D355) interacts with Zn(2+). Zn(2+) is bound at residue H414.

This sequence belongs to the histidinol dehydrogenase family. The cofactor is Zn(2+).

It catalyses the reaction L-histidinol + 2 NAD(+) + H2O = L-histidine + 2 NADH + 3 H(+). It functions in the pathway amino-acid biosynthesis; L-histidine biosynthesis; L-histidine from 5-phospho-alpha-D-ribose 1-diphosphate: step 9/9. In terms of biological role, catalyzes the sequential NAD-dependent oxidations of L-histidinol to L-histidinaldehyde and then to L-histidine. In Oceanobacillus iheyensis (strain DSM 14371 / CIP 107618 / JCM 11309 / KCTC 3954 / HTE831), this protein is Histidinol dehydrogenase.